We begin with the raw amino-acid sequence, 595 residues long: Probable Xaa-Pro aminopeptidase CHGG_02942 (595 aa).

The disordered stretch occupies residues 51–76; the sequence is KSGPSSSNLSPSTLSTEKTSSDSSGV. Positions 52-66 are enriched in low complexity; it reads SGPSSSNLSPSTLST. Mn(2+) contacts are provided by Asp334, Asp345, Glu541, and Glu563.

Belongs to the peptidase M24B family. It depends on Mn(2+) as a cofactor.

It carries out the reaction Release of any N-terminal amino acid, including proline, that is linked to proline, even from a dipeptide or tripeptide.. Its function is as follows. Catalyzes the removal of a penultimate prolyl residue from the N-termini of peptides. In Chaetomium globosum (strain ATCC 6205 / CBS 148.51 / DSM 1962 / NBRC 6347 / NRRL 1970) (Soil fungus), this protein is Probable Xaa-Pro aminopeptidase CHGG_02942.